A 531-amino-acid chain; its full sequence is Cytochrome P450 monooxygenase ffsD (531 aa).

Residues 40–60 (VGALLGISLSVVLLLWVISVV) traverse the membrane as a helical segment. Cysteine 475 serves as a coordination point for heme.

It belongs to the cytochrome P450 family. Heme serves as cofactor.

It localises to the membrane. Its pathway is mycotoxin biosynthesis. Its function is as follows. Cytochrome P450 monooxygenase; part of the gene cluster that mediates the biosynthesis of the cytotoxic leucine-containing cytochalasans, including aspochalasin C, aspochalasin E, TMC-169, flavichalasine F, aspergillin PZ, aspochalasin M and flavichalasine G. The first step in the pathway is catalyzed by the hybrid PKS-NRPS ffsA that utilizes 8 units of malonyl-CoA to iteratively assemble the octaketide chain before addition of L-leucine by the C-terminal NRPS modules. Because ffsA lacks a designated enoylreductase (ER) domain, the required activity is provided the enoyl reductase fssC. The methyltransferase (MT) domain of ffsA catalyzes the alpha-methylation at C10 and C14 using S-adenosyl-L-methionine as the methyl-donating cosubstrate. Reduction by the hydrolyase ffsE, followed by dehydration and intra-molecular Diels-Alder cyclization by the Diels-Alderase ffsF then yield the required isoindolone-fused macrocycle. A number of oxidative steps catalyzed by the tailoring cytochrome P450 monooxygenase ffsD, the FAD-linked oxidoreductase ffsJ and the short-chain dehydrogenase/reductase ffsI, are further required to afford the final products. This chain is Cytochrome P450 monooxygenase ffsD, found in Aspergillus flavipes.